A 935-amino-acid polypeptide reads, in one-letter code: Isoleucine--tRNA ligase (935 aa).

The short motif at 58-68 is the 'HIGH' region element; the sequence is PYANGSIHVGH. Glu-558 lines the L-isoleucyl-5'-AMP pocket. The 'KMSKS' region signature appears at 599-603; sequence KMSKS. Residue Lys-602 coordinates ATP. Zn(2+) contacts are provided by Cys-897, Cys-900, Cys-917, and Cys-920.

This sequence belongs to the class-I aminoacyl-tRNA synthetase family. IleS type 1 subfamily. As to quaternary structure, monomer. Zn(2+) is required as a cofactor.

It is found in the cytoplasm. The enzyme catalyses tRNA(Ile) + L-isoleucine + ATP = L-isoleucyl-tRNA(Ile) + AMP + diphosphate. Functionally, catalyzes the attachment of isoleucine to tRNA(Ile). As IleRS can inadvertently accommodate and process structurally similar amino acids such as valine, to avoid such errors it has two additional distinct tRNA(Ile)-dependent editing activities. One activity is designated as 'pretransfer' editing and involves the hydrolysis of activated Val-AMP. The other activity is designated 'posttransfer' editing and involves deacylation of mischarged Val-tRNA(Ile). The chain is Isoleucine--tRNA ligase from Francisella tularensis subsp. tularensis (strain SCHU S4 / Schu 4).